Consider the following 192-residue polypeptide: Guanylate kinase (192 aa).

Residues 7 to 185 enclose the Guanylate kinase-like domain; the sequence is GLIIILSSPS…TLKKIHEIIV (179 aa). Position 14-21 (14-21) interacts with ATP; sequence SPSGTGKS.

The protein belongs to the guanylate kinase family.

The protein resides in the cytoplasm. It carries out the reaction GMP + ATP = GDP + ADP. In terms of biological role, essential for recycling GMP and indirectly, cGMP. The sequence is that of Guanylate kinase from Rickettsia felis (strain ATCC VR-1525 / URRWXCal2) (Rickettsia azadi).